The following is a 208-amino-acid chain: ATP-dependent Clp protease proteolytic subunit (208 aa).

Ser-98 (nucleophile) is an active-site residue. His-123 is a catalytic residue.

The protein belongs to the peptidase S14 family. Fourteen ClpP subunits assemble into 2 heptameric rings which stack back to back to give a disk-like structure with a central cavity, resembling the structure of eukaryotic proteasomes.

Its subcellular location is the cytoplasm. It carries out the reaction Hydrolysis of proteins to small peptides in the presence of ATP and magnesium. alpha-casein is the usual test substrate. In the absence of ATP, only oligopeptides shorter than five residues are hydrolyzed (such as succinyl-Leu-Tyr-|-NHMec, and Leu-Tyr-Leu-|-Tyr-Trp, in which cleavage of the -Tyr-|-Leu- and -Tyr-|-Trp bonds also occurs).. Cleaves peptides in various proteins in a process that requires ATP hydrolysis. Has a chymotrypsin-like activity. Plays a major role in the degradation of misfolded proteins. The protein is ATP-dependent Clp protease proteolytic subunit of Wolbachia sp. subsp. Brugia malayi (strain TRS).